The sequence spans 148 residues: Deoxyuridine 5'-triphosphate nucleotidohydrolase (148 aa).

Substrate contacts are provided by residues 67 to 69 (RSG), Asn80, 84 to 86 (LID), and Met94.

Belongs to the dUTPase family. Mg(2+) is required as a cofactor.

It carries out the reaction dUTP + H2O = dUMP + diphosphate + H(+). The protein operates within pyrimidine metabolism; dUMP biosynthesis; dUMP from dCTP (dUTP route): step 2/2. This enzyme is involved in nucleotide metabolism: it produces dUMP, the immediate precursor of thymidine nucleotides and it decreases the intracellular concentration of dUTP so that uracil cannot be incorporated into DNA. The polypeptide is Deoxyuridine 5'-triphosphate nucleotidohydrolase (Burkholderia ambifaria (strain ATCC BAA-244 / DSM 16087 / CCUG 44356 / LMG 19182 / AMMD) (Burkholderia cepacia (strain AMMD))).